A 373-amino-acid polypeptide reads, in one-letter code: Flagellar P-ring protein (373 aa).

The N-terminal stretch at 1–26 is a signal peptide; that stretch reads MKLFFRIVTLVAVVAMSLADMAPAWA.

It belongs to the FlgI family. In terms of assembly, the basal body constitutes a major portion of the flagellar organelle and consists of four rings (L,P,S, and M) mounted on a central rod.

The protein localises to the periplasm. The protein resides in the bacterial flagellum basal body. Assembles around the rod to form the L-ring and probably protects the motor/basal body from shearing forces during rotation. This Rhizobium etli (strain ATCC 51251 / DSM 11541 / JCM 21823 / NBRC 15573 / CFN 42) protein is Flagellar P-ring protein.